The primary structure comprises 238 residues: 2-C-methyl-D-erythritol 4-phosphate cytidylyltransferase (238 aa).

It belongs to the IspD/TarI cytidylyltransferase family. IspD subfamily.

It carries out the reaction 2-C-methyl-D-erythritol 4-phosphate + CTP + H(+) = 4-CDP-2-C-methyl-D-erythritol + diphosphate. It functions in the pathway isoprenoid biosynthesis; isopentenyl diphosphate biosynthesis via DXP pathway; isopentenyl diphosphate from 1-deoxy-D-xylulose 5-phosphate: step 2/6. In terms of biological role, catalyzes the formation of 4-diphosphocytidyl-2-C-methyl-D-erythritol from CTP and 2-C-methyl-D-erythritol 4-phosphate (MEP). The polypeptide is 2-C-methyl-D-erythritol 4-phosphate cytidylyltransferase (Acinetobacter baumannii (strain ACICU)).